A 459-amino-acid polypeptide reads, in one-letter code: V-type ATP synthase beta chain (459 aa).

It belongs to the ATPase alpha/beta chains family.

In terms of biological role, produces ATP from ADP in the presence of a proton gradient across the membrane. The V-type beta chain is a regulatory subunit. The polypeptide is V-type ATP synthase beta chain (Thermoanaerobacter pseudethanolicus (strain ATCC 33223 / 39E) (Clostridium thermohydrosulfuricum)).